Here is a 316-residue protein sequence, read N- to C-terminus: Bifunctional protein FolD (316 aa).

NADP(+) contacts are provided by residues 165–167 (GKS) and I231.

The protein belongs to the tetrahydrofolate dehydrogenase/cyclohydrolase family. In terms of assembly, homodimer.

The catalysed reaction is (6R)-5,10-methylene-5,6,7,8-tetrahydrofolate + NADP(+) = (6R)-5,10-methenyltetrahydrofolate + NADPH. It carries out the reaction (6R)-5,10-methenyltetrahydrofolate + H2O = (6R)-10-formyltetrahydrofolate + H(+). It functions in the pathway one-carbon metabolism; tetrahydrofolate interconversion. Functionally, catalyzes the oxidation of 5,10-methylenetetrahydrofolate to 5,10-methenyltetrahydrofolate and then the hydrolysis of 5,10-methenyltetrahydrofolate to 10-formyltetrahydrofolate. In Sphingobium chlorophenolicum, this protein is Bifunctional protein FolD.